Reading from the N-terminus, the 524-residue chain is GMP synthase [glutamine-hydrolyzing] (524 aa).

A Glutamine amidotransferase type-1 domain is found at R9 to N207. Catalysis depends on C86, which acts as the Nucleophile. Catalysis depends on residues H181 and E183. The 192-residue stretch at W208–R399 folds into the GMPS ATP-PPase domain. Residue S235–A241 coordinates ATP.

Homodimer.

It carries out the reaction XMP + L-glutamine + ATP + H2O = GMP + L-glutamate + AMP + diphosphate + 2 H(+). Its pathway is purine metabolism; GMP biosynthesis; GMP from XMP (L-Gln route): step 1/1. Functionally, catalyzes the synthesis of GMP from XMP. This is GMP synthase [glutamine-hydrolyzing] from Coxiella burnetii (strain CbuG_Q212) (Coxiella burnetii (strain Q212)).